A 208-amino-acid polypeptide reads, in one-letter code: FMN-dependent NADH:quinone oxidoreductase (208 aa).

Residues Ser-10, 16–18, 94–97, and 138–141 contribute to the FMN site; these read SVS, MYNF, and SRGG.

It belongs to the azoreductase type 1 family. In terms of assembly, homodimer. The cofactor is FMN.

It carries out the reaction 2 a quinone + NADH + H(+) = 2 a 1,4-benzosemiquinone + NAD(+). It catalyses the reaction N,N-dimethyl-1,4-phenylenediamine + anthranilate + 2 NAD(+) = 2-(4-dimethylaminophenyl)diazenylbenzoate + 2 NADH + 2 H(+). Quinone reductase that provides resistance to thiol-specific stress caused by electrophilic quinones. In terms of biological role, also exhibits azoreductase activity. Catalyzes the reductive cleavage of the azo bond in aromatic azo compounds to the corresponding amines. This is FMN-dependent NADH:quinone oxidoreductase from Hyphomonas neptunium (strain ATCC 15444).